A 524-amino-acid polypeptide reads, in one-letter code: MNGVDINSNLDSIKAKAEDIRNLLLTTSTGNWEDILGHFVVLSGEYGSLVREVNNIYDSVAVFPEQVTGDPNLIPNLLRTKLSPELETKNRDIINQYVSKNSTHYDPGNQEENIPPLKLHIKSFNDRIDKVDQEFENKIQQISKHKLTKPSASHDTAILKDILSITMLGSGIKINAQQQLAQQQQQQATINALQQQQRLLNAQQQQQQQQQPQALYKLPATNTANTSTNTPSSTIVINSPSPGGIHHNVPTPPTNLNAAGTRTSPPNVQQYVNSPPPQQQQQQQINTVIGTPNTIPTTPTATVSTAATYKPVASPQQQVTSKQVPIQSTNKPLPQQQPSIQIQPQQSIVQMVQNVLPNTTSPPVNNNNQSPINSGIGGGQFKPSAINIANANSGTSTIQQQIQLQQQQLQQQIQLQQQLAQQQQQNQQNQQNQQNQQNQQNQQIHQHIQHLTPQQQAQLQQQMLQQQQLQQQFQQQQLSQQLLQQQQLHQQQQPNQTIQNPFHNFQANNFRVQNPTNFNPPQNQ.

Coiled-coil stretches lie at residues 117-146 and 175-211; these read LKLHIKSFNDRIDKVDQEFENKIQQISKHK and NAQQQLAQQQQQQATINALQQQQRLLNAQQQQQQQQQ. Disordered stretches follow at residues 312–340, 356–379, and 430–451; these read VASPQQQVTSKQVPIQSTNKPLPQQQPSI, LPNTTSPPVNNNNQSPINSGIGGG, and QQNQQNQQNQQNQQIHQHIQHL. Polar residues predominate over residues 314 to 333; it reads SPQQQVTSKQVPIQSTNKPL. The segment covering 356–374 has biased composition (low complexity); it reads LPNTTSPPVNNNNQSPINS. Residues 398 to 478 are a coiled coil; that stretch reads IQQQIQLQQQ…LQQQFQQQQL (81 aa).

This sequence belongs to the Mediator complex subunit 8 family. Component of the Mediator complex. May be part of a multisubunit E3 ubiquitin-protein ligase complex.

It localises to the nucleus. Its pathway is protein modification; protein ubiquitination. Functionally, component of the Mediator complex, a coactivator involved in the regulated transcription of nearly all RNA polymerase II-dependent genes. Mediator functions as a bridge to convey information from gene-specific regulatory proteins to the basal RNA polymerase II transcription machinery. Mediator is recruited to promoters by direct interactions with regulatory proteins and serves as a scaffold for the assembly of a functional preinitiation complex with RNA polymerase II and the general transcription factors. May play a role as a target recruitment subunit in E3 ubiquitin-protein ligase complexes and thus in ubiquitination and subsequent proteasomal degradation of target proteins. The chain is Putative mediator of RNA polymerase II transcription subunit 8 (med8) from Dictyostelium discoideum (Social amoeba).